A 165-amino-acid chain; its full sequence is Peptide deformylase (165 aa).

Fe cation is bound by residues C88 and H130. Residue E131 is part of the active site. Position 134 (H134) interacts with Fe cation.

It belongs to the polypeptide deformylase family. The cofactor is Fe(2+).

The catalysed reaction is N-terminal N-formyl-L-methionyl-[peptide] + H2O = N-terminal L-methionyl-[peptide] + formate. In terms of biological role, removes the formyl group from the N-terminal Met of newly synthesized proteins. Requires at least a dipeptide for an efficient rate of reaction. N-terminal L-methionine is a prerequisite for activity but the enzyme has broad specificity at other positions. This Borreliella burgdorferi (strain ATCC 35210 / DSM 4680 / CIP 102532 / B31) (Borrelia burgdorferi) protein is Peptide deformylase.